A 161-amino-acid chain; its full sequence is 6,7-dimethyl-8-ribityllumazine synthase (161 aa).

Residues Trp25, Ala57–Glu59, and Val80–Ile82 each bind 5-amino-6-(D-ribitylamino)uracil. (2S)-2-hydroxy-3-oxobutyl phosphate is bound at residue Gly85–Thr86. His88 (proton donor) is an active-site residue. Phe113 provides a ligand contact to 5-amino-6-(D-ribitylamino)uracil. Arg127 contributes to the (2S)-2-hydroxy-3-oxobutyl phosphate binding site.

This sequence belongs to the DMRL synthase family.

It catalyses the reaction (2S)-2-hydroxy-3-oxobutyl phosphate + 5-amino-6-(D-ribitylamino)uracil = 6,7-dimethyl-8-(1-D-ribityl)lumazine + phosphate + 2 H2O + H(+). The protein operates within cofactor biosynthesis; riboflavin biosynthesis; riboflavin from 2-hydroxy-3-oxobutyl phosphate and 5-amino-6-(D-ribitylamino)uracil: step 1/2. In terms of biological role, catalyzes the formation of 6,7-dimethyl-8-ribityllumazine by condensation of 5-amino-6-(D-ribitylamino)uracil with 3,4-dihydroxy-2-butanone 4-phosphate. This is the penultimate step in the biosynthesis of riboflavin. The protein is 6,7-dimethyl-8-ribityllumazine synthase of Kineococcus radiotolerans (strain ATCC BAA-149 / DSM 14245 / SRS30216).